We begin with the raw amino-acid sequence, 536 residues long: DEAD-box ATP-dependent RNA helicase 41 (536 aa).

The span at 1 to 10 (MEQEENHSAD) shows a compositional bias: basic and acidic residues. Residues 1–25 (MEQEENHSADHLSAQPGNGNELEES) are disordered. The segment at 40–69 (GEPRCVICGRYGEYICDQTDDDICSVECKT) adopts an HIT-type zinc-finger fold. A Q motif motif is present at residues 137 to 165 (MCFSSSGLPEKLVLNLEAAGYVMPTPVQM). In terms of domain architecture, Helicase ATP-binding spans 168-344 (IPSSICNRSL…NSLAKNAIHI (177 aa)). 181 to 188 (ADTGSGKT) contacts ATP. The DEAD box motif lies at 293-296 (DEVD). Positions 355–518 (SVKQVVIWVE…PIPRELANSK (164 aa)) constitute a Helicase C-terminal domain.

It belongs to the DEAD box helicase family. DDX59 subfamily.

The enzyme catalyses ATP + H2O = ADP + phosphate + H(+). This Oryza sativa subsp. japonica (Rice) protein is DEAD-box ATP-dependent RNA helicase 41.